Consider the following 331-residue polypeptide: Ferredoxin--NADP reductase 2 (331 aa).

FAD is bound by residues Glu37, Gln45, Tyr50, Val90, Phe124, Asp285, and Thr326.

It belongs to the ferredoxin--NADP reductase type 2 family. Homodimer. The cofactor is FAD.

It catalyses the reaction 2 reduced [2Fe-2S]-[ferredoxin] + NADP(+) + H(+) = 2 oxidized [2Fe-2S]-[ferredoxin] + NADPH. The protein is Ferredoxin--NADP reductase 2 of Bacillus velezensis (strain DSM 23117 / BGSC 10A6 / LMG 26770 / FZB42) (Bacillus amyloliquefaciens subsp. plantarum).